The chain runs to 664 residues: Trifunctional UDP-glucose 4,6-dehydratase/UDP-4-keto-6-deoxy-D-glucose 3,5-epimerase/UDP-4-keto-L-rhamnose-reductase RHM3 (664 aa).

Residue 13–19 participates in NAD(+) binding; it reads GAAGFIA. Position 132 (Thr-132) interacts with substrate. Asp-133 functions as the Proton donor in the catalytic mechanism. Active-site proton acceptor residues include Glu-134 and Tyr-159. Position 386–392 (386–392) interacts with NADP(+); it reads GKTGWLG.

The protein in the N-terminal section; belongs to the NAD(P)-dependent epimerase/dehydratase family. dTDP-glucose dehydratase subfamily. This sequence in the C-terminal section; belongs to the dTDP-4-dehydrorhamnose reductase family. The cofactor is NAD(+). Requires NADP(+) as cofactor. In terms of tissue distribution, expressed in roots, stems, seedlings, and siliques. Lower expression in inflorescence tips, and leaves.

It carries out the reaction UDP-alpha-D-glucose = UDP-4-dehydro-6-deoxy-alpha-D-glucose + H2O. It participates in carbohydrate biosynthesis. Its function is as follows. Trifunctional enzyme involved in UDP-beta-L-rhamnose biosynthesis, a precursor of the primary cell wall components rhamnogalacturonan I (RG-I) and rhamnogalacturonan II (RG-II). Catalyzes the dehydration of UDP-glucose to form UDP-4-dehydro-6-deoxy-D-glucose followed by the epimerization of the C3' and C5' positions of UDP-4-dehydro-6-deoxy-D-glucose to form UDP-4-keto-beta-L-rhamnose and the reduction of UDP-4-keto-beta-L-rhamnose to yield UDP-beta-L-rhamnose. This chain is Trifunctional UDP-glucose 4,6-dehydratase/UDP-4-keto-6-deoxy-D-glucose 3,5-epimerase/UDP-4-keto-L-rhamnose-reductase RHM3, found in Arabidopsis thaliana (Mouse-ear cress).